The primary structure comprises 1019 residues: Sca1 complex protein phr (1019 aa).

Disordered regions lie at residues I89–F118, A131–N202, Q265–N287, and S512–L546. Residues S93 to S102 are compositionally biased toward low complexity. Residues N141–D155 are compositionally biased toward basic and acidic residues. A coiled-coil region spans residues N158–N188. The span at N158–N202 shows a compositional bias: low complexity. Positions E735–F836 constitute a PH domain. Residues V860 to G872 show a composition bias toward low complexity. 3 disordered regions span residues V860 to I890, N904 to L951, and S977 to K1019. The span at T879–I890 shows a compositional bias: polar residues. Positions S977–S986 are enriched in low complexity. Residues P987–K1019 are compositionally biased toward polar residues.

Component of the Sca1 complex composed of at least gefA, gefH, scaA, phr, and the protein phosphatase 2A subunits pppA and pho2B. Interacts directly with gefH.

It is found in the cell membrane. Component of the Sca1 complex, a regulator of cell motility, chemotaxis and signal relay. The Sca1 complex is recruited to the plasma membrane in a chemoattractant- and F-actin-dependent manner and is enriched at the leading edge of chemotaxing cells where it regulates F-actin dynamics and signal relay by controlling the activation of rasC and the downstream target of rapamycin complex 2 (TORC2)-Akt/protein kinase B (PKB) pathway. The chain is Sca1 complex protein phr from Dictyostelium discoideum (Social amoeba).